Reading from the N-terminus, the 399-residue chain is Zinc finger HIT domain-containing protein 2 (399 aa).

Methionine 1 bears the N-acetylmethionine mark. Residues cysteine 7, cysteine 10, cysteine 22, cysteine 25, cysteine 30, cysteine 34, histidine 38, and cysteine 41 each contribute to the Zn(2+) site. An HIT-type zinc finger spans residues 7-41; that stretch reads CGFCPAGEALPARYTCPRCNAPYCSLRCYRAHGAC. 2 disordered regions span residues 70 to 97 and 152 to 175; these read RLRE…GLSG and AEPE…AEPF. The span at 86–96 shows a compositional bias: gly residues; the sequence is LGPGARPGGLS. The residue at position 161 (threonine 161) is a Phosphothreonine.

Interacts (via HIT-type zinc finger) with RUVBL2 in the presence of ATP or ADP; shows a stronger interaction in the presence of ADP. Low expression in most tissues; highly expressed in testis; particularly in seminiferous tubules.

Its function is as follows. May act as a bridging factor mediating the interaction between the R2TP/Prefoldin-like (R2TP/PFDL) complex and U5 small nuclear ribonucleoprotein (U5 snRNP). Required for the interaction of R2TP complex subunit RPAP3 and prefoldin-like subunit URI1 with U5 snRNP proteins EFTUD2 and PRPF8. May play a role in regulating the composition of the U5 snRNP complex. This Mus musculus (Mouse) protein is Zinc finger HIT domain-containing protein 2 (Znhit2).